An 81-amino-acid chain; its full sequence is Cortexin-2 (81 aa).

A helical membrane pass occupies residues 29-49 (TGFAFVGILCIFLGLLIIRCF).

Belongs to the cortexin family.

Its subcellular location is the membrane. This Homo sapiens (Human) protein is Cortexin-2 (CTXN2).